The primary structure comprises 428 residues: MPDHSHIYIGSAFVAGVVLTIAFKDLFYPEIEERIRDYRARHSSKSYQNASVDSLAVRHGPPAIVDGIEGCIGNTPLLRIKSLSEATGCEILAKAEFLNGAGQSSKDRVALSMIELAEERGLMTPHSGDTIYEGTSGSTGISLATLARAKGYLAHICMPSDQAIEKSNLLLKLGAIVDRVPPAPIVEKDNFVNRARALAQAHTNSTASESSVGTASQRGRGYFADQFENEANWRAHYNGTGPEIYAQCNGSLDAFVAGAGTGGTISGVALYLKPRIPNMTVVVADPQGSGLYNRVRYGVMFDTKEKEGTRRRRQVDTIVEGIGINRVTANFEAGRELVDDAVRVTDAQALAMARWLVEKDGIFAGSSSAVNCFAAVKTALKLGPGHRIVTMLSDSGSRHLSRFWAKAGNVGGAVDTKLEDVLNAKEDQ.

Residues 7 to 27 (IYIGSAFVAGVVLTIAFKDLF) form a helical membrane-spanning segment. N6-(pyridoxal phosphate)lysine is present on lysine 106. Pyridoxal 5'-phosphate is bound by residues 260–264 (GTGGT) and serine 367.

This sequence belongs to the cysteine synthase/cystathionine beta-synthase family. The cofactor is pyridoxal 5'-phosphate.

It localises to the mitochondrion outer membrane. It carries out the reaction O-acetyl-L-serine + hydrogen sulfide = L-cysteine + acetate. Putative cysteine synthase that catalyzes the conversion of O-acetyl-L-serine (OAS) into cysteine, the last step in the cysteine biosynthesis pathway. However, in contrast to cysteine synthase cysB, this CS-like protein seems not to function in cysteine biosynthesis. This chain is Cysteine synthase 2, found in Emericella nidulans (strain FGSC A4 / ATCC 38163 / CBS 112.46 / NRRL 194 / M139) (Aspergillus nidulans).